The sequence spans 314 residues: Methionyl-tRNA formyltransferase (314 aa).

(6S)-5,6,7,8-tetrahydrofolate is bound at residue 112–115 (SLLP).

It belongs to the Fmt family.

It catalyses the reaction L-methionyl-tRNA(fMet) + (6R)-10-formyltetrahydrofolate = N-formyl-L-methionyl-tRNA(fMet) + (6S)-5,6,7,8-tetrahydrofolate + H(+). In terms of biological role, attaches a formyl group to the free amino group of methionyl-tRNA(fMet). The formyl group appears to play a dual role in the initiator identity of N-formylmethionyl-tRNA by promoting its recognition by IF2 and preventing the misappropriation of this tRNA by the elongation apparatus. The protein is Methionyl-tRNA formyltransferase of Legionella pneumophila (strain Corby).